The chain runs to 266 residues: Zinc transporter ZupT (266 aa).

Helical transmembrane passes span 8-28, 35-55, 70-90, 123-143, 152-172, 185-205, 209-229, and 246-266; these read LLLT…ALVV, FLTL…FVEL, QAAA…IWAI, GLFT…AVFF, GIVI…AIAV, FTYS…GFAI, WLSP…MVYI, and LAIS…LLLA. Residues asparagine 134 and glutamate 137 each coordinate Fe(2+). 2 residues coordinate Zn(2+): glutamate 137 and histidine 162. Asparagine 163, glutamate 166, and glutamate 195 together coordinate Fe(2+). Position 166 (glutamate 166) interacts with Zn(2+).

The protein belongs to the ZIP transporter (TC 2.A.5) family. ZupT subfamily.

It localises to the cell membrane. The catalysed reaction is Zn(2+)(in) = Zn(2+)(out). In terms of biological role, mediates zinc uptake. May also transport other divalent cations. The protein is Zinc transporter ZupT of Chlorobium phaeovibrioides (strain DSM 265 / 1930) (Prosthecochloris vibrioformis (strain DSM 265)).